The sequence spans 447 residues: MALLQFGGTLAPKLGEKPQLLPRSPALTRVIYADPRFLVSKSGSGGRLKHLVSPTASLQSRTSSRLFNHAPSPRFRHRRSSRFIVRADADFYSTLGVSRNASKSEIKSAYRKLARSYHPDVNKDPGAEQKFKDISNAYEVLSDDEKRSIYDKYGEAGLKGAGMGTGDYSNPFDLFESLFEGFGGMGGMGGRAARNRPMQGDDEAYNLVLNFKEAVFGVEKEIEITRLEGCNTCDGTGAKPGTKPTTCKTCGGQGQVVSSTRTPLGIFQQVSTCNTCGGTGEFSTPCNTCGGDGRVRKTKRISLKVPAGVDSGSRLRVRSEGNAGRRGGPPGDLYVFIDVLSDPVLKRDGTNILYTCKVSYIDAILGTTVKVPTVDGMVDLKIPSGTQPGTTLVMSKKGVPLLGKSNARGDQLVRVQVEIPKRLSSDERKLIEELANLNKAQTANSRR.

The N-terminal 86 residues, 1-86, are a transit peptide targeting the chloroplast; it reads MALLQFGGTL…HRRSSRFIVR (86 aa). In terms of domain architecture, J spans 90–154; it reads DFYSTLGVSR…EKRSIYDKYG (65 aa). The segment at 217–298 adopts a CR-type zinc-finger fold; it reads GVEKEIEITR…CGGDGRVRKT (82 aa). Zn(2+) is bound by residues Cys230, Cys233, Cys247, Cys250, Cys273, Cys276, Cys286, and Cys289. 4 CXXCXGXG motif repeats span residues 230–237, 247–254, 273–280, and 286–293; these read CNTCDGTG, CKTCGGQG, CNTCGGTG, and CNTCGGDG.

This sequence belongs to the DnaJ family. In terms of assembly, interacts with PCNA. In terms of tissue distribution, expressed in roots, stems, leaves and panicles.

It is found in the plastid. It localises to the chloroplast. Functionally, plays pivotal roles in chloroplast development. Is essential for the regulation of chloroplast development and differentiation. The protein is Chaperone protein dnaJ A7B, chloroplastic of Oryza sativa subsp. japonica (Rice).